Reading from the N-terminus, the 172-residue chain is RNA pyrophosphohydrolase (172 aa).

A Nudix hydrolase domain is found at 6–149 (GYRLNVGIVI…KRDVYRRAMK (144 aa)). Residues 38 to 59 (GGIDDGETPEQAMFRELYEEVG) carry the Nudix box motif.

Belongs to the Nudix hydrolase family. RppH subfamily. A divalent metal cation serves as cofactor.

In terms of biological role, accelerates the degradation of transcripts by removing pyrophosphate from the 5'-end of triphosphorylated RNA, leading to a more labile monophosphorylated state that can stimulate subsequent ribonuclease cleavage. The protein is RNA pyrophosphohydrolase of Vibrio vulnificus (strain CMCP6).